The sequence spans 347 residues: NHL repeat-containing protein 3 (347 aa).

The N-terminal stretch at 1 to 25 is a signal peptide; that stretch reads MARFWVCVAGAGFFLAFLVLHSRFC. An N-linked (GlcNAc...) asparagine glycan is attached at asparagine 32. The stretch at 47 to 93 is one NHL 1 repeat; it reads RLDVGWPKHPEYFTGTTFCVAVDSLNGLVYIGQRGDNIPKILVFTED. Asparagine 101 carries an N-linked (GlcNAc...) asparagine glycan. NHL repeat units follow at residues 150 to 196 and 200 to 243; these read TPGK…LSQD and LWLH…FDKD. N-linked (GlcNAc...) asparagine glycans are attached at residues asparagine 206 and asparagine 278. One copy of the NHL 4 repeat lies at 294–338; it reads GECSVISTIQLADQVLPHLLEVDRKTGAVYVAEIGAKQVQKYVPL.

Its subcellular location is the secreted. The sequence is that of NHL repeat-containing protein 3 (NHLRC3) from Homo sapiens (Human).